The primary structure comprises 352 residues: Protein RecA (352 aa).

An ATP-binding site is contributed by 67-74; it reads GPESSGKT.

This sequence belongs to the RecA family.

Its subcellular location is the cytoplasm. Its function is as follows. Can catalyze the hydrolysis of ATP in the presence of single-stranded DNA, the ATP-dependent uptake of single-stranded DNA by duplex DNA, and the ATP-dependent hybridization of homologous single-stranded DNAs. It interacts with LexA causing its activation and leading to its autocatalytic cleavage. The protein is Protein RecA of Chlamydia trachomatis serovar D (strain ATCC VR-885 / DSM 19411 / UW-3/Cx).